We begin with the raw amino-acid sequence, 146 residues long: 3-hydroxyacyl-[acyl-carrier-protein] dehydratase FabZ (146 aa).

His49 is a catalytic residue.

This sequence belongs to the thioester dehydratase family. FabZ subfamily.

The protein localises to the cytoplasm. It carries out the reaction a (3R)-hydroxyacyl-[ACP] = a (2E)-enoyl-[ACP] + H2O. In terms of biological role, involved in unsaturated fatty acids biosynthesis. Catalyzes the dehydration of short chain beta-hydroxyacyl-ACPs and long chain saturated and unsaturated beta-hydroxyacyl-ACPs. In Pseudomonas aeruginosa (strain LESB58), this protein is 3-hydroxyacyl-[acyl-carrier-protein] dehydratase FabZ.